The sequence spans 129 residues: uncharacterized protein (129 aa).

Residues 1 to 28 lie on the Cytoplasmic side of the membrane; the sequence is MAGTLFIILRFVDTTLPSSRVYCVRSLE. The chain crosses the membrane as a helical span at residues 29 to 49; that stretch reads VSVAVELAAATVLAFESIGVV. Over 50-54 the chain is Extracellular; it reads DDCGR. A helical transmembrane segment spans residues 55 to 75; that stretch reads SVLFSIILIAAFICSVFLIAS. Over 76–129 the chain is Cytoplasmic; the sequence is EDIAGSRRSTGSCVTLWEGRNISFCLYRSNWLNTVPVGYMFFLRKNRSLDERYF.

Its subcellular location is the membrane. This is an uncharacterized protein from Saccharomyces cerevisiae (strain ATCC 204508 / S288c) (Baker's yeast).